An 844-amino-acid chain; its full sequence is Eukaryotic translation elongation factor 2 (844 aa).

Residues 17–348 form the tr-type G domain; that stretch reads RNIRNMSVIA…MIAIHLPSPV (332 aa). 26-33 provides a ligand contact to GTP; sequence AHVDHGKS. A phosphothreonine mark is found at threonine 57 and threonine 59. GTP contacts are provided by residues 162–165 and 219–221; these read NKMD and SGL. At histidine 701 the chain carries Diphthamide.

This sequence belongs to the TRAFAC class translation factor GTPase superfamily. Classic translation factor GTPase family. EF-G/EF-2 subfamily. Post-translationally, phosphorylation by EF-2 kinase completely inactivates eEF2.

Its subcellular location is the cytoplasm. The enzyme catalyses GTP + H2O = GDP + phosphate + H(+). Functionally, catalyzes the GTP-dependent ribosomal translocation step during translation elongation. During this step, the ribosome changes from the pre-translocational (PRE) to the post-translocational (POST) state as the newly formed A-site-bound peptidyl-tRNA and P-site-bound deacylated tRNA move to the P and E sites, respectively. Catalyzes the coordinated movement of the two tRNA molecules, the mRNA and conformational changes in the ribosome. This chain is Eukaryotic translation elongation factor 2, found in Drosophila melanogaster (Fruit fly).